The primary structure comprises 231 residues: DNA mismatch repair protein MutH (231 aa).

This sequence belongs to the MutH family.

It is found in the cytoplasm. Functionally, sequence-specific endonuclease that cleaves unmethylated GATC sequences. It is involved in DNA mismatch repair. The protein is DNA mismatch repair protein MutH of Shewanella woodyi (strain ATCC 51908 / MS32).